The primary structure comprises 594 residues: Solute carrier family 13 member 1 (594 aa).

Helical transmembrane passes span 13–33, 40–60, 77–97, 113–133, and 134–154; these read FLLV…IRTK, ILFV…ITAL, VASA…CLAT, VMMV…STAF, and LSMW…VEAV. The N-linked (GlcNAc...) asparagine glycan is linked to asparagine 174. Residues 192-220 are compositionally biased toward basic and acidic residues; the sequence is TNEKKEKTKPAPGSSHDKGKVSRKMETEK. Residues 192 to 226 are disordered; the sequence is TNEKKEKTKPAPGSSHDKGKVSRKMETEKNAVTGA. 8 helical membrane-spanning segments follow: residues 239 to 259, 283 to 303, 347 to 367, 380 to 400, 461 to 481, 487 to 507, 511 to 531, and 552 to 572; these read LMCL…ITGT, SWFL…WIWL, IVTL…DPGF, GYVT…LIPA, LSPL…LIVT, ASNP…AEAI, PLQI…LPVA, and AGLG…FTWI. Asparagine 590 carries N-linked (GlcNAc...) asparagine glycosylation.

Belongs to the SLC13A/DASS transporter (TC 2.A.47) family. NADC subfamily. As to expression, highly expressed in kidney and ileum, detected at lower levels in duodenum/jejunum and colon, and at very low levels in cecum, testis, adrenal and adipose tissues. Expressed in the kidney.

It is found in the apical cell membrane. The catalysed reaction is sulfate(out) + 3 Na(+)(out) = sulfate(in) + 3 Na(+)(in). It catalyses the reaction selenate(out) + 3 Na(+)(out) = selenate(in) + 3 Na(+)(in). The enzyme catalyses thiosulfate(out) + 3 Na(+)(out) = thiosulfate(in) + 3 Na(+)(in). Sodium:sulfate symporter that mediates sulfate reabsorption in the kidney and small intestine. Can also mediate the transport of selenate and thiosulfate. The sequence is that of Solute carrier family 13 member 1 (Slc13a1) from Mus musculus (Mouse).